A 325-amino-acid chain; its full sequence is Phospho-N-acetylmuramoyl-pentapeptide-transferase (325 aa).

10 consecutive transmembrane segments (helical) span residues 9–29 (ALLV…PWLL), 53–73 (TMGG…FQAF), 77–97 (TLLL…DDYL), 112–132 (KLLG…AFLG), 154–174 (LGNV…ANAV), 182–202 (GLCS…SLAL), 204–224 (EKGL…FLVY), 231–251 (VFMG…FAVL), 257–277 (FLLL…IQVI), and 305–325 (KIVL…GYGL).

It belongs to the glycosyltransferase 4 family. MraY subfamily. The cofactor is Mg(2+).

The protein localises to the cell membrane. It catalyses the reaction UDP-N-acetyl-alpha-D-muramoyl-L-alanyl-gamma-D-glutamyl-meso-2,6-diaminopimeloyl-D-alanyl-D-alanine + di-trans,octa-cis-undecaprenyl phosphate = di-trans,octa-cis-undecaprenyl diphospho-N-acetyl-alpha-D-muramoyl-L-alanyl-D-glutamyl-meso-2,6-diaminopimeloyl-D-alanyl-D-alanine + UMP. The protein operates within cell wall biogenesis; peptidoglycan biosynthesis. In terms of biological role, catalyzes the initial step of the lipid cycle reactions in the biosynthesis of the cell wall peptidoglycan: transfers peptidoglycan precursor phospho-MurNAc-pentapeptide from UDP-MurNAc-pentapeptide onto the lipid carrier undecaprenyl phosphate, yielding undecaprenyl-pyrophosphoryl-MurNAc-pentapeptide, known as lipid I. In Carboxydothermus hydrogenoformans (strain ATCC BAA-161 / DSM 6008 / Z-2901), this protein is Phospho-N-acetylmuramoyl-pentapeptide-transferase.